The following is a 519-amino-acid chain: Exodeoxyribonuclease 7 large subunit (519 aa).

This sequence belongs to the XseA family. Heterooligomer composed of large and small subunits.

The protein resides in the cytoplasm. The enzyme catalyses Exonucleolytic cleavage in either 5'- to 3'- or 3'- to 5'-direction to yield nucleoside 5'-phosphates.. Functionally, bidirectionally degrades single-stranded DNA into large acid-insoluble oligonucleotides, which are then degraded further into small acid-soluble oligonucleotides. The protein is Exodeoxyribonuclease 7 large subunit of Cereibacter sphaeroides (strain ATCC 17025 / ATH 2.4.3) (Rhodobacter sphaeroides).